The primary structure comprises 605 residues: Probable potassium transport system protein Kup 1 (605 aa).

The next 12 membrane-spanning stretches (helical) occupy residues 16 to 36, 46 to 66, 97 to 117, 138 to 158, 166 to 186, 212 to 232, 248 to 268, 287 to 307, 339 to 359, 368 to 388, 397 to 417, and 418 to 438; these read ALGLVFGDIGTSPIYTLTVIF, VFGILSLVFWTMTILVTMEYA, VAFAGFLSFVGVSLLLGDGVI, GLSTGTLVAIAAAIAIGLFSV, VAGAFGPIMAVWFSTLAVTGV, GLAGYFVLSEVILCSTGGEAL, WYFVFMALYLNYLGQGVFAIT, LYIPFLILTIMATIIASQSII, IYLGAVNWSLMVAVILVMLLF, AYGMAVTGSMTITGIMMIIVF, ALVALVITLIDAAYLLSTFSK, and IPHGAYWSLILASIPFVTIII.

Belongs to the HAK/KUP transporter (TC 2.A.72) family.

The protein resides in the cell inner membrane. The enzyme catalyses K(+)(in) + H(+)(in) = K(+)(out) + H(+)(out). Transport of potassium into the cell. Likely operates as a K(+):H(+) symporter. This Geobacter metallireducens (strain ATCC 53774 / DSM 7210 / GS-15) protein is Probable potassium transport system protein Kup 1.